The primary structure comprises 280 residues: 4-diphosphocytidyl-2-C-methyl-D-erythritol kinase (280 aa).

Lysine 8 is a catalytic residue. An ATP-binding site is contributed by 91 to 101 (PVSAGLAGGST). Aspartate 133 is a catalytic residue.

This sequence belongs to the GHMP kinase family. IspE subfamily.

It catalyses the reaction 4-CDP-2-C-methyl-D-erythritol + ATP = 4-CDP-2-C-methyl-D-erythritol 2-phosphate + ADP + H(+). It functions in the pathway isoprenoid biosynthesis; isopentenyl diphosphate biosynthesis via DXP pathway; isopentenyl diphosphate from 1-deoxy-D-xylulose 5-phosphate: step 3/6. Functionally, catalyzes the phosphorylation of the position 2 hydroxy group of 4-diphosphocytidyl-2C-methyl-D-erythritol. The chain is 4-diphosphocytidyl-2-C-methyl-D-erythritol kinase from Clostridium botulinum (strain Eklund 17B / Type B).